The sequence spans 119 residues: Ribosome-binding factor A (119 aa).

The protein belongs to the RbfA family. As to quaternary structure, monomer. Binds 30S ribosomal subunits, but not 50S ribosomal subunits or 70S ribosomes.

Its subcellular location is the cytoplasm. In terms of biological role, one of several proteins that assist in the late maturation steps of the functional core of the 30S ribosomal subunit. Associates with free 30S ribosomal subunits (but not with 30S subunits that are part of 70S ribosomes or polysomes). Required for efficient processing of 16S rRNA. May interact with the 5'-terminal helix region of 16S rRNA. The chain is Ribosome-binding factor A from Lactococcus lactis subsp. cremoris (strain SK11).